Reading from the N-terminus, the 332-residue chain is Malate dehydrogenase, cytoplasmic (332 aa).

NAD(+) is bound by residues 11–17 and Asp42; that span reads GAAGQIA. Residues Arg92 and Arg98 each coordinate substrate. NAD(+)-binding positions include Asn105, Gln112, and 129–131; that span reads VGN. The substrate site is built by Asn131 and Arg162. The active-site Proton acceptor is the His187.

Belongs to the LDH/MDH superfamily. MDH type 2 family. In terms of assembly, homodimer.

Its subcellular location is the cytoplasm. The catalysed reaction is (S)-malate + NAD(+) = oxaloacetate + NADH + H(+). By arsenate for both the forward and reverse reactions. Malate dehydrogenase. Has no activity with NADPH as substrate. Does not show lactate dehydrogenase activity. The polypeptide is Malate dehydrogenase, cytoplasmic (Taenia solium (Pork tapeworm)).